The primary structure comprises 199 residues: NAD(P)H dehydrogenase (quinone) (199 aa).

Residues 4-190 (VLVLYYSAYG…AGARYQGRVI (187 aa)) form the Flavodoxin-like domain. FMN is bound by residues 10-15 (SAYGHI) and 78-80 (TRF). Tyrosine 12 serves as a coordination point for NAD(+). Residue tryptophan 98 participates in substrate binding. FMN is bound by residues 113-119 (STATQHG) and histidine 134.

It belongs to the WrbA family. The cofactor is FMN.

The catalysed reaction is a quinone + NADH + H(+) = a quinol + NAD(+). It catalyses the reaction a quinone + NADPH + H(+) = a quinol + NADP(+). This Bradyrhizobium sp. (strain ORS 278) protein is NAD(P)H dehydrogenase (quinone).